The following is a 712-amino-acid chain: WD repeat-containing protein 91 (712 aa).

Residues 148–180 (RRTNQVQEENEVLRQKLFALQAEIHRLKKEEQQ) are a coiled coil. Position 221 is a phosphoserine (S221). Low complexity predominate over residues 230 to 243 (LLPQSKKSPSRLSP). Residues 230–336 (LLPQSKKSPS…EAEPCPELHT (107 aa)) are disordered. Residues S253 and S258 each carry the phosphoserine modification. Over residues 297-308 (RLQDHGKERKEL) the composition is skewed to basic and acidic residues. WD repeat units follow at residues 371-410 (EHHSSIMHCRVDCSGRRVASLDVDGVIKVWSFNPIMQTKA), 413-453 (ISKS…NLCE), 480-520 (AAPS…QQLQ), 525-564 (PEPIAINCTAFNHNGNLLVTGAADGVIRLFDMQQHECAMS), 567-606 (AHYGEVYSVEFSYDENTVYSIGEDGKFIQWNIHKSGLKVS), 629-667 (VQVPRGRLFAFDSEGNYMLTCSATGGVIYKLGGDEKVLE), and 674-712 (GHRAPVVTVDWSTAMDCGTCLTASMDGKIKLTTLLAHKA).

The protein belongs to the WD repeat WDR91 family. Interacts with WDR81; involved in early to late endosome cargo transport. Interacts with BECN1; negatively regulates the PI3 kinase/PI3K activity associated with endosomal membranes.

The protein localises to the early endosome membrane. The protein resides in the late endosome membrane. Its function is as follows. Functions as a negative regulator of the PI3 kinase/PI3K activity associated with endosomal membranes via BECN1, a core subunit of the PI3K complex. By modifying the phosphatidylinositol 3-phosphate/PtdInsP3 content of endosomal membranes may regulate endosome fusion, recycling, sorting and early to late endosome transport. It is for instance, required for the delivery of cargos like BST2/tetherin from early to late endosome and thereby participates indirectly to their degradation by the lysosome. May play a role in meiosis. The sequence is that of WD repeat-containing protein 91 from Pongo abelii (Sumatran orangutan).